The primary structure comprises 133 residues: Small ribosomal subunit protein uS8 (133 aa).

Belongs to the universal ribosomal protein uS8 family. Part of the 30S ribosomal subunit. Contacts proteins S5 and S12.

Its function is as follows. One of the primary rRNA binding proteins, it binds directly to 16S rRNA central domain where it helps coordinate assembly of the platform of the 30S subunit. This Prochlorococcus marinus subsp. pastoris (strain CCMP1986 / NIES-2087 / MED4) protein is Small ribosomal subunit protein uS8.